Reading from the N-terminus, the 349-residue chain is ATP phosphoribosyltransferase regulatory subunit (349 aa).

Positions 327–349 (GRGRGVRPRRASARGGRARARPR) are disordered. Positions 330–349 (RGVRPRRASARGGRARARPR) are enriched in basic residues.

The protein belongs to the class-II aminoacyl-tRNA synthetase family. HisZ subfamily. As to quaternary structure, heteromultimer composed of HisG and HisZ subunits.

The protein resides in the cytoplasm. Its pathway is amino-acid biosynthesis; L-histidine biosynthesis; L-histidine from 5-phospho-alpha-D-ribose 1-diphosphate: step 1/9. Required for the first step of histidine biosynthesis. May allow the feedback regulation of ATP phosphoribosyltransferase activity by histidine. This is ATP phosphoribosyltransferase regulatory subunit from Anaeromyxobacter dehalogenans (strain 2CP-1 / ATCC BAA-258).